A 246-amino-acid chain; its full sequence is Ribosomal RNA large subunit methyltransferase E (246 aa).

Gly81, Trp83, Asp104, Asp120, and Asp144 together coordinate S-adenosyl-L-methionine. Lys184 (proton acceptor) is an active-site residue.

This sequence belongs to the class I-like SAM-binding methyltransferase superfamily. RNA methyltransferase RlmE family.

Its subcellular location is the cytoplasm. It catalyses the reaction uridine(2552) in 23S rRNA + S-adenosyl-L-methionine = 2'-O-methyluridine(2552) in 23S rRNA + S-adenosyl-L-homocysteine + H(+). Specifically methylates the uridine in position 2552 of 23S rRNA at the 2'-O position of the ribose in the fully assembled 50S ribosomal subunit. This chain is Ribosomal RNA large subunit methyltransferase E, found in Agrobacterium fabrum (strain C58 / ATCC 33970) (Agrobacterium tumefaciens (strain C58)).